The primary structure comprises 596 residues: NADH-quinone oxidoreductase subunit C/D (596 aa).

Residues Met-1 to Glu-186 are NADH dehydrogenase I subunit C. The segment at Asp-210–Arg-596 is NADH dehydrogenase I subunit D.

In the N-terminal section; belongs to the complex I 30 kDa subunit family. This sequence in the C-terminal section; belongs to the complex I 49 kDa subunit family. NDH-1 is composed of 13 different subunits. Subunits NuoB, CD, E, F, and G constitute the peripheral sector of the complex.

It localises to the cell inner membrane. It carries out the reaction a quinone + NADH + 5 H(+)(in) = a quinol + NAD(+) + 4 H(+)(out). NDH-1 shuttles electrons from NADH, via FMN and iron-sulfur (Fe-S) centers, to quinones in the respiratory chain. The immediate electron acceptor for the enzyme in this species is believed to be ubiquinone. Couples the redox reaction to proton translocation (for every two electrons transferred, four hydrogen ions are translocated across the cytoplasmic membrane), and thus conserves the redox energy in a proton gradient. This chain is NADH-quinone oxidoreductase subunit C/D, found in Blochmanniella floridana.